Consider the following 155-residue polypeptide: Ribosome maturation factor RimP (155 aa).

Belongs to the RimP family.

It localises to the cytoplasm. Its function is as follows. Required for maturation of 30S ribosomal subunits. The chain is Ribosome maturation factor RimP from Prochlorococcus marinus (strain MIT 9211).